The sequence spans 177 residues: CDP-archaeol synthase (177 aa).

Transmembrane regions (helical) follow at residues leucine 6–phenylalanine 26, cysteine 54–phenylalanine 74, valine 90–isoleucine 110, leucine 124–isoleucine 144, and methionine 148–tyrosine 168.

This sequence belongs to the CDP-archaeol synthase family. It depends on Mg(2+) as a cofactor.

It localises to the cell membrane. It carries out the reaction 2,3-bis-O-(geranylgeranyl)-sn-glycerol 1-phosphate + CTP + H(+) = CDP-2,3-bis-O-(geranylgeranyl)-sn-glycerol + diphosphate. It participates in membrane lipid metabolism; glycerophospholipid metabolism. Functionally, catalyzes the formation of CDP-2,3-bis-(O-geranylgeranyl)-sn-glycerol (CDP-archaeol) from 2,3-bis-(O-geranylgeranyl)-sn-glycerol 1-phosphate (DGGGP) and CTP. This reaction is the third ether-bond-formation step in the biosynthesis of archaeal membrane lipids. This chain is CDP-archaeol synthase, found in Methanocaldococcus jannaschii (strain ATCC 43067 / DSM 2661 / JAL-1 / JCM 10045 / NBRC 100440) (Methanococcus jannaschii).